The sequence spans 434 residues: ATP-dependent protease ATPase subunit HslU (434 aa).

ATP is bound by residues V18, 60-65 (GVGKTE), D247, E312, and R384.

Belongs to the ClpX chaperone family. HslU subfamily. A double ring-shaped homohexamer of HslV is capped on each side by a ring-shaped HslU homohexamer. The assembly of the HslU/HslV complex is dependent on binding of ATP.

It localises to the cytoplasm. In terms of biological role, ATPase subunit of a proteasome-like degradation complex; this subunit has chaperone activity. The binding of ATP and its subsequent hydrolysis by HslU are essential for unfolding of protein substrates subsequently hydrolyzed by HslV. HslU recognizes the N-terminal part of its protein substrates and unfolds these before they are guided to HslV for hydrolysis. In Hyphomonas neptunium (strain ATCC 15444), this protein is ATP-dependent protease ATPase subunit HslU.